We begin with the raw amino-acid sequence, 266 residues long: Glucosamine-6-phosphate deaminase (266 aa).

D72 functions as the Proton acceptor; for enolization step in the catalytic mechanism. The For ring-opening step role is filled by D141. H143 serves as the catalytic Proton acceptor; for ring-opening step. The active-site For ring-opening step is the E148.

It belongs to the glucosamine/galactosamine-6-phosphate isomerase family. NagB subfamily. As to quaternary structure, homohexamer.

The catalysed reaction is alpha-D-glucosamine 6-phosphate + H2O = beta-D-fructose 6-phosphate + NH4(+). Its pathway is amino-sugar metabolism; N-acetylneuraminate degradation; D-fructose 6-phosphate from N-acetylneuraminate: step 5/5. Its activity is regulated as follows. Allosterically activated by N-acetylglucosamine 6-phosphate (GlcNAc6P). In terms of biological role, catalyzes the reversible isomerization-deamination of glucosamine 6-phosphate (GlcN6P) to form fructose 6-phosphate (Fru6P) and ammonium ion. The sequence is that of Glucosamine-6-phosphate deaminase from Yersinia enterocolitica serotype O:8 / biotype 1B (strain NCTC 13174 / 8081).